The primary structure comprises 156 residues: Small ribosomal subunit protein uS7 (156 aa).

The protein belongs to the universal ribosomal protein uS7 family. As to quaternary structure, part of the 30S ribosomal subunit. Contacts proteins S9 and S11.

Functionally, one of the primary rRNA binding proteins, it binds directly to 16S rRNA where it nucleates assembly of the head domain of the 30S subunit. Is located at the subunit interface close to the decoding center, probably blocks exit of the E-site tRNA. The protein is Small ribosomal subunit protein uS7 of Cupriavidus metallidurans (strain ATCC 43123 / DSM 2839 / NBRC 102507 / CH34) (Ralstonia metallidurans).